A 55-amino-acid polypeptide reads, in one-letter code: Large ribosomal subunit protein bL33 (55 aa).

Belongs to the bacterial ribosomal protein bL33 family.

In Rhizobium meliloti (strain 1021) (Ensifer meliloti), this protein is Large ribosomal subunit protein bL33.